Consider the following 334-residue polypeptide: DNA polymerase III subunit delta' (334 aa).

As to quaternary structure, the DNA polymerase III holoenzyme complex contains at least 10 different subunits organized into 3 functionally essential subassemblies: the Pol III core, the beta sliding clamp processivity factor and the clamp-loading complex. The Pol III core (subunits alpha, epsilon and theta) contains the polymerase and the 3'-5' exonuclease proofreading activities. The polymerase is tethered to the template via the dimeric beta sliding clamp processivity factor. The clamp-loading complex (also called gamma complex) assembles the beta sliding clamp onto the primed template and plays a central role in the organization and communication at the replication fork. The clamp-loading complex contains delta, delta', psi and chi, and 3 copies of either or both of two different DnaX proteins, gamma and tau. The DNA replisome complex has a single clamp loader (3 tau and 1 each of delta, delta', psi and chi subunits) which binds 3 Pol III cores (1 core on the leading strand and 2 on the lagging strand) each with a beta sliding clamp dimer. Additional proteins in the replisome are other copies of gamma, psi and chi, Ssb, DNA helicase and RNA primase. The clamp loader hydrolyzes ATP to assemble the beta processivity factor onto the primed template and plays a central role in the organization and communication at the replication fork; the minimal complex to load the beta sliding clamp on DNA is delta, delta', gamma.

It catalyses the reaction DNA(n) + a 2'-deoxyribonucleoside 5'-triphosphate = DNA(n+1) + diphosphate. Its function is as follows. Part of the beta sliding clamp loading complex, which hydrolyzes ATP to load the beta clamp onto primed DNA to form the DNA replication pre-initiation complex. DNA polymerase III is a complex, multichain enzyme responsible for most of the replicative synthesis in bacteria. This DNA polymerase also exhibits 3' to 5' exonuclease activity. The gamma complex (gamma(3),delta,delta') is thought to load beta dimers onto DNA by binding ATP which alters the complex's conformation so it can bind beta sliding clamp dimers and open them at one interface. Primed DNA is recognized, ATP is hydrolyzed releasing the gamma complex and closing the beta sliding clamp ring around the primed DNA. This is DNA polymerase III subunit delta' (holB) from Escherichia coli (strain K12).